The following is an 85-amino-acid chain: Large ribosomal subunit protein bL27 (85 aa).

The disordered stretch occupies residues 1-20 (MATKKAGGSTRNGRDSEAKR).

The protein belongs to the bacterial ribosomal protein bL27 family.

In Actinobacillus pleuropneumoniae serotype 5b (strain L20), this protein is Large ribosomal subunit protein bL27.